We begin with the raw amino-acid sequence, 67 residues long: Beta-defensin 103A (67 aa).

Positions 1-22 (MRIHYLLFALLFLFLVPVPGHG) are cleaved as a signal peptide. Intrachain disulfides connect C33/C62, C40/C55, and C45/C63.

It belongs to the beta-defensin family.

It is found in the secreted. Functionally, exhibits antimicrobial activity against Gram-positive and Gram-negative bacteria. This Pan troglodytes (Chimpanzee) protein is Beta-defensin 103A (DEFB103A).